The chain runs to 1075 residues: Putative type I restriction enzyme MjaVIIP endonuclease subunit (1075 aa).

Belongs to the HsdR family. The type I restriction/modification system is composed of three polypeptides R, M and S.

It catalyses the reaction Endonucleolytic cleavage of DNA to give random double-stranded fragments with terminal 5'-phosphates, ATP is simultaneously hydrolyzed.. The restriction (R) subunit of a type I restriction enzyme that recognizes 5'-CAAN(7)TGG-3' and cleaves a random distance away. The R subunit is required for both endonuclease and ATPase activities but not for modification. After locating a non-methylated recognition site, the enzyme complex serves as a molecular motor that translocates DNA in an ATP-dependent manner until a collision occurs that triggers cleavage. The protein is Putative type I restriction enzyme MjaVIIP endonuclease subunit of Methanocaldococcus jannaschii (strain ATCC 43067 / DSM 2661 / JAL-1 / JCM 10045 / NBRC 100440) (Methanococcus jannaschii).